Here is a 1485-residue protein sequence, read N- to C-terminus: MYSSSNSFMGGANSARPGQPPFMQQPSYSQYPPGQPQSQQQTGFPSQPTGYGLQPPQLVGSQLQPQQTGFPGQLQPQFTGFPGAAPQQQQQQQQLGGFQQSVQQPQFTGYPPQNQLLSLQAPSTTGLPTRPAPRTSSEVASSFNDGAGVAPPPPPKSAGSKIPSIRLSFITAQDQAKFEQLFKSAVGDSQTIDGGKAKELLLRSRLPGSELSKIWILSDTTKSGQLFFPEFALAMYLCNLRITGRELPPSLPEKIKNEVSSMVDIISFGVPDTQPEPSRSNVPSFDAPLLENKSAPPAPQQPQPQQPTNAHLLSQLAAQPTGFLPQQTGFQPNQSSFLGPSAGLAPQATGFPGQSQQQYLQTQPTGLMTNPQATGYSGPRPPLPPMPTGFGSNLSPAQTGGASALVAQPTGIPGQWGFVNAPSSGLPNIEALKQQLMPQPGREGGFTTAGLSGNASIPWAITKEEKKIYDDLFRAWDGFHKGFIGGDTAIEIMGQSGLNRQDLERIWTLADPHNRGRLNMDEFAVAMHLIYRKLNGYPVPSRLPPELIPPSTRNLNDSIGTVKSLLSQDAESRKASGAFLQPQKTGVSYLKEHSFRGGARSPGVGRKDATLFKNNDEAAAGYRSSARRRVGNNARAASPATSHTSEEELSVEQLKKKIRETQIMLDAVDFQDENRAEEDEALDRRDRREAESLMDRVRRIQDDIDTHPNATFRNLDNGAEKRSLRRQLQAYEDQVPQVASEVRRIERELAEAKLELFRLKDAKAHPNSASNIVGTGPGGAVTEADRIKARARARMQARAAELAGRPVPASADDDGAAARRLESESTVIRADRERNEAMTRDVEESVREFTRSLEDSFKEGGETSTREHERRRWEDALGVEDVIRDFIYDLKRGSRTAHVRKEEETRTLPTHDHRVRHEDPSIASRPSPAPSAGSVGSAPGATHEDRVAAARERAQRRIAERMAAAGLKPHTDSTETLVQRQEREKREREERLRRAEEEDAKREQERQRRLAEEQRGPAKPAATKPVGKKPPPAPPSRRGRTDSAGQADARPAVEETAATEQAAREQAIREEQQAQEEETKRLEMEAQQREQELLKEKEAQEARLRALEEQVRQGKVRKQEEKRRKEEAERSAKEQEAKLAAQRAELEMARERERQLQLELEGLEDESSSDEEGPVNITPQDSTPTQSQVLPAPSPAAAAPEPELEPPVSPEITSSASSHAAPSSFSPETESKNPYFRITSQAAENQVSSPPPVPQTTITSPKTDVQSTNPFHRLAQQEAAKPAFTAPGPLERKSRVRPEADDDWSAAGSDFDSSDDEDDERPGGGSAKQLASILFGTMAPPRPLSAMDDKSPSKSSTPVQDNTVASPVVPEASASLSAPAAPPPPPPPPPPPASAPMVVPSYDPSTAPPPPPPAPPIAPPAPPPGPPPPPGPPPPPAPPGAAAPAAPAGAADRSALLASIQMGKGLRKVQTNDRSSSSSAGRVLG.

Positions 1-161 are disordered; that stretch reads MYSSSNSFMG…PPPPKSAGSK (161 aa). A compositionally biased stretch (low complexity) spans 21–49; it reads PFMQQPSYSQYPPGQPQSQQQTGFPSQPT. Residues 59–78 show a composition bias toward polar residues; that stretch reads VGSQLQPQQTGFPGQLQPQF. A compositionally biased stretch (low complexity) spans 81-107; sequence FPGAAPQQQQQQQQLGGFQQSVQQPQF. Polar residues-rich tracts occupy residues 111–127 and 134–144; these read PPQN…TTGL and RTSSEVASSFN. The region spanning 174-262 is the EH 1 domain; it reads DQAKFEQLFK…EKIKNEVSSM (89 aa). One can recognise an EF-hand 1 domain in the interval 206–241; the sequence is LPGSELSKIWILSDTTKSGQLFFPEFALAMYLCNLR. Disordered stretches follow at residues 268 to 309 and 323 to 342; these read FGVP…QPTN and FLPQ…GPSA. The segment covering 296-305 has biased composition (pro residues); that stretch reads PPAPQQPQPQ. A compositionally biased stretch (polar residues) spans 323-338; sequence FLPQQTGFQPNQSSFL. Positions 465–554 constitute an EH 2 domain; that stretch reads EKKIYDDLFR…PELIPPSTRN (90 aa). In terms of domain architecture, EF-hand 2 spans 498–533; it reads LNRQDLERIWTLADPHNRGRLNMDEFAVAMHLIYRK. Disordered stretches follow at residues 620–649, 799–871, and 895–1485; these read AGYR…EEEL, AAEL…HERR, and RTAH…RVLG. Residues 645 to 765 are a coiled coil; the sequence is SEEELSVEQL…LFRLKDAKAH (121 aa). Composition is skewed to basic and acidic residues over residues 816–871 and 899–920; these read AAAR…HERR and VRKE…HEDP. Low complexity predominate over residues 921 to 941; it reads SIASRPSPAPSAGSVGSAPGA. Basic and acidic residues-rich tracts occupy residues 942–960, 980–1016, 1062–1137, and 1144–1156; these read THED…RIAE, RQER…EQRG, AARE…EQEA, and AELE…ERQL. Residues 1054–1172 adopt a coiled-coil conformation; the sequence is EETAATEQAA…LEDESSSDEE (119 aa). Over residues 1161-1173 the composition is skewed to acidic residues; it reads EGLEDESSSDEEG. Positions 1177–1188 are enriched in polar residues; that stretch reads ITPQDSTPTQSQ. Low complexity-rich tracts occupy residues 1189 to 1201 and 1210 to 1226; these read VLPA…AAPE and PEIT…SSFS. 2 stretches are compositionally biased toward polar residues: residues 1238–1248 and 1255–1270; these read ITSQAAENQVS and QTTI…STNP. A compositionally biased stretch (basic and acidic residues) spans 1290–1299; sequence LERKSRVRPE. A compositionally biased stretch (polar residues) spans 1353 to 1363; sequence SKSSTPVQDNT. Residues 1364-1379 show a composition bias toward low complexity; sequence VASPVVPEASASLSAP. 2 stretches are compositionally biased toward pro residues: residues 1380-1394 and 1406-1441; these read AAPP…PPAS and TAPP…PPGA. The segment covering 1442-1451 has biased composition (low complexity); sequence AAPAAPAGAA. Positions 1452–1469 constitute a WH2 domain; sequence DRSALLASIQMGKGLRKV. Positions 1472 to 1485 are enriched in polar residues; that stretch reads NDRSSSSSAGRVLG.

It belongs to the PAN1 family. In terms of assembly, component of the PAN1 actin cytoskeleton-regulatory complex.

The protein localises to the cell membrane. It localises to the endosome membrane. The protein resides in the cytoplasm. It is found in the cytoskeleton. Its subcellular location is the actin patch. In terms of biological role, component of the PAN1 actin cytoskeleton-regulatory complex required for the internalization of endosomes during actin-coupled endocytosis. The complex links the site of endocytosis to the cell membrane-associated actin cytoskeleton. Mediates uptake of external molecules and vacuolar degradation of plasma membrane proteins. Plays a role in the proper organization of the cell membrane-associated actin cytoskeleton and promotes its destabilization. In Aspergillus clavatus (strain ATCC 1007 / CBS 513.65 / DSM 816 / NCTC 3887 / NRRL 1 / QM 1276 / 107), this protein is Actin cytoskeleton-regulatory complex protein pan1 (pan1).